We begin with the raw amino-acid sequence, 412 residues long: MKIYLVGGAVRDALLGLPVKDRDWVVVGSTPQEMLDAGYQQVGRDFPVFLHPQTHEEYALARTERKSGSGYTGFTCYAAPDVTLEDDLKRRDLTINALAQDDNGEIIDPYNGLGDLQNRLLRHVSPAFGEDPLRVLRVARFAARYAHLGFRIADETLTLMREMTHAGELEHLTPERVWKETESALTTRNPQVFFQVLRDCGALRVLFPEIDALFGVPAPARWHPEIDTGIHTLMTLSMAAMLSPQVDVRFATLCHDLGKGLTPPELWPRHHGHGPAGVKLVEQLCQRLRVPNEIRDLARLVAEFHDLIHTFPMLNPKTIVKLFDSIDAWRKPQRVEQLALTSEADVRGRTGFESADYPQGRWLREAWEVAQSVPTKAVVEAGFKGVEIREELTRRRIAAVASWKEQRCPKPD.

The ATP site is built by G8 and R11. CTP contacts are provided by G8 and R11. D21 and D23 together coordinate Mg(2+). 3 residues coordinate ATP: R91, R137, and R140. Positions 91, 137, and 140 each coordinate CTP. Positions 228-329 (TGIHTLMTLS…VKLFDSIDAW (102 aa)) constitute an HD domain.

This sequence belongs to the tRNA nucleotidyltransferase/poly(A) polymerase family. Bacterial CCA-adding enzyme type 1 subfamily. As to quaternary structure, monomer. Can also form homodimers and oligomers. Mg(2+) is required as a cofactor. The cofactor is Ni(2+).

It carries out the reaction a tRNA precursor + 2 CTP + ATP = a tRNA with a 3' CCA end + 3 diphosphate. It catalyses the reaction a tRNA with a 3' CCA end + 2 CTP + ATP = a tRNA with a 3' CCACCA end + 3 diphosphate. Catalyzes the addition and repair of the essential 3'-terminal CCA sequence in tRNAs without using a nucleic acid template. Adds these three nucleotides in the order of C, C, and A to the tRNA nucleotide-73, using CTP and ATP as substrates and producing inorganic pyrophosphate. tRNA 3'-terminal CCA addition is required both for tRNA processing and repair. Also involved in tRNA surveillance by mediating tandem CCA addition to generate a CCACCA at the 3' terminus of unstable tRNAs. While stable tRNAs receive only 3'-terminal CCA, unstable tRNAs are marked with CCACCA and rapidly degraded. This chain is Multifunctional CCA protein, found in Escherichia coli O8 (strain IAI1).